Here is a 468-residue protein sequence, read N- to C-terminus: 3-isopropylmalate dehydratase large subunit (468 aa).

Positions 347, 407, and 410 each coordinate [4Fe-4S] cluster. Over residues 424–441 (SASSSNRNFKGRQGSPSG) the composition is skewed to polar residues. The interval 424–443 (SASSSNRNFKGRQGSPSGRT) is disordered.

Belongs to the aconitase/IPM isomerase family. LeuC type 1 subfamily. As to quaternary structure, heterodimer of LeuC and LeuD. It depends on [4Fe-4S] cluster as a cofactor.

It catalyses the reaction (2R,3S)-3-isopropylmalate = (2S)-2-isopropylmalate. Its pathway is amino-acid biosynthesis; L-leucine biosynthesis; L-leucine from 3-methyl-2-oxobutanoate: step 2/4. Functionally, catalyzes the isomerization between 2-isopropylmalate and 3-isopropylmalate, via the formation of 2-isopropylmaleate. In Prochlorococcus marinus (strain MIT 9215), this protein is 3-isopropylmalate dehydratase large subunit.